Here is a 295-residue protein sequence, read N- to C-terminus: Glutamyl-Q tRNA(Asp) synthetase (295 aa).

L-glutamate is bound by residues 5–9 and Glu-41; that span reads RFAPS. A 'HIGH' region motif is present at residues 8–18; the sequence is PSPTGLLHIGS. Residues Cys-97, Cys-99, Tyr-117, and Cys-121 each coordinate Zn(2+). L-glutamate is bound by residues Tyr-178 and Arg-196. The short motif at 234-238 is the 'KMSKS' region element; sequence KWSKQ. Residue Lys-237 coordinates ATP.

The protein belongs to the class-I aminoacyl-tRNA synthetase family. GluQ subfamily. The cofactor is Zn(2+).

Its function is as follows. Catalyzes the tRNA-independent activation of glutamate in presence of ATP and the subsequent transfer of glutamate onto a tRNA(Asp). Glutamate is transferred on the 2-amino-5-(4,5-dihydroxy-2-cyclopenten-1-yl) moiety of the queuosine in the wobble position of the QUC anticodon. The polypeptide is Glutamyl-Q tRNA(Asp) synthetase (Neisseria meningitidis serogroup C (strain 053442)).